A 395-amino-acid polypeptide reads, in one-letter code: Indoleacetate--lysine synthetase (395 aa).

The protein belongs to the ATP-dependent AMP-binding enzyme family.

It catalyses the reaction (indol-3-yl)acetate + L-lysine + ATP = N(6)-[(indole-3-yl)acetyl]-L-lysine + ADP + phosphate + H(+). Conversion of IAA to IAA-lysine. The polypeptide is Indoleacetate--lysine synthetase (iaaL) (Pseudomonas savastanoi (Pseudomonas syringae pv. savastanoi)).